The chain runs to 725 residues: Endoglucanase G (725 aa).

Positions 1-35 are cleaved as a signal peptide; sequence MLKTKRKLTKAIGVALSISILSSLVSFIPQTNTYA. Aspartate 93 functions as the Nucleophile in the catalytic mechanism. Residues histidine 408, aspartate 446, and glutamate 455 contribute to the active site. Positions 489–650 constitute a CBM3 domain; it reads ITNDEVIIKA…GVKVFGNEPA (162 aa). In terms of domain architecture, Dockerin spans 658 to 724; the sequence is PEILYGDVNS…LLGTITQLPQ (67 aa).

The protein belongs to the glycosyl hydrolase 9 (cellulase E) family.

The catalysed reaction is Endohydrolysis of (1-&gt;4)-beta-D-glucosidic linkages in cellulose, lichenin and cereal beta-D-glucans.. The protein operates within glycan metabolism; cellulose degradation. Functionally, the biological conversion of cellulose to glucose generally requires three types of hydrolytic enzymes: (1) Endoglucanases which cut internal beta-1,4-glucosidic bonds; (2) Exocellobiohydrolases that cut the disaccharide cellobiose from the non-reducing end of the cellulose polymer chain; (3) Beta-1,4-glucosidases which hydrolyze the cellobiose and other short cello-oligosaccharides to glucose. The protein is Endoglucanase G (celCCG) of Ruminiclostridium cellulolyticum (strain ATCC 35319 / DSM 5812 / JCM 6584 / H10) (Clostridium cellulolyticum).